The primary structure comprises 802 residues: DNA mismatch repair protein MutS (802 aa).

617–624 (GPNMGGKS) is a binding site for ATP.

This sequence belongs to the DNA mismatch repair MutS family.

This protein is involved in the repair of mismatches in DNA. It is possible that it carries out the mismatch recognition step. This protein has a weak ATPase activity. The sequence is that of DNA mismatch repair protein MutS from Buchnera aphidicola subsp. Acyrthosiphon pisum (strain Tuc7).